A 177-amino-acid polypeptide reads, in one-letter code: Neuroblastoma suppressor of tumorigenicity 1 (177 aa).

The first 16 residues, 1–16 (MLWFVVGALFPALLLA), serve as a signal peptide directing secretion. 5 disulfide bridges follow: Cys34–Cys84, Cys48–Cys98, Cys58–Cys117, Cys62–Cys119, and Cys81–Cys122. In terms of domain architecture, CTCK spans 34 to 123 (CEAKNITQIV…ILHCSCQACG (90 aa)). The segment at 143 to 177 (MPAEGPGPHHYAHHQQEVEEPPASSHHHHEEEGDE) is disordered.

Belongs to the DAN family.

The protein localises to the secreted. In terms of biological role, may act as a tumor suppressor. The protein is Neuroblastoma suppressor of tumorigenicity 1 (NBL1) of Gallus gallus (Chicken).